We begin with the raw amino-acid sequence, 241 residues long: Uridylate kinase (241 aa).

14–17 (KLSG) lines the ATP pocket. The tract at residues 22-27 (GNQGFG) is involved in allosteric activation by GTP. Gly56 provides a ligand contact to UMP. ATP-binding residues include Gly57 and Arg61. UMP-binding positions include Asp76 and 137–144 (TGNPYFTT). Positions 164, 170, and 173 each coordinate ATP.

It belongs to the UMP kinase family. As to quaternary structure, homohexamer.

The protein resides in the cytoplasm. The catalysed reaction is UMP + ATP = UDP + ADP. It participates in pyrimidine metabolism; CTP biosynthesis via de novo pathway; UDP from UMP (UMPK route): step 1/1. With respect to regulation, allosterically activated by GTP. Inhibited by UTP. In terms of biological role, catalyzes the reversible phosphorylation of UMP to UDP. This Syntrophotalea carbinolica (strain DSM 2380 / NBRC 103641 / GraBd1) (Pelobacter carbinolicus) protein is Uridylate kinase.